The chain runs to 203 residues: GTP cyclohydrolase-2 (203 aa).

A GTP-binding site is contributed by 49–53 (RIHSE). Cysteine 54, cysteine 65, and cysteine 67 together coordinate Zn(2+). Residues glutamine 70, 92–94 (EGR), and threonine 114 contribute to the GTP site. Aspartate 126 (proton acceptor) is an active-site residue. Arginine 128 serves as the catalytic Nucleophile. GTP-binding residues include threonine 149 and lysine 154.

This sequence belongs to the GTP cyclohydrolase II family. The cofactor is Zn(2+).

It carries out the reaction GTP + 4 H2O = 2,5-diamino-6-hydroxy-4-(5-phosphoribosylamino)-pyrimidine + formate + 2 phosphate + 3 H(+). It functions in the pathway cofactor biosynthesis; riboflavin biosynthesis; 5-amino-6-(D-ribitylamino)uracil from GTP: step 1/4. Its function is as follows. Catalyzes the conversion of GTP to 2,5-diamino-6-ribosylamino-4(3H)-pyrimidinone 5'-phosphate (DARP), formate and pyrophosphate. The polypeptide is GTP cyclohydrolase-2 (Shewanella sp. (strain W3-18-1)).